We begin with the raw amino-acid sequence, 150 residues long: Profilin (150 aa).

Belongs to the profilin family. As to quaternary structure, occurs in many kinds of cells as a complex with monomeric actin in a 1:1 ratio.

It is found in the cytoplasm. The protein resides in the cytoskeleton. In terms of biological role, binds to actin and affects the structure of the cytoskeleton. At high concentrations, profilin prevents the polymerization of actin, whereas it enhances it at low concentrations. By binding to PIP2, it inhibits the formation of IP3 and DG. The sequence is that of Profilin from Trypanosoma brucei brucei.